Reading from the N-terminus, the 348-residue chain is Rhodopsin (348 aa).

Position 1 is an N-acetylmethionine (Met-1). Residues Met-1 to Gln-36 are Extracellular-facing. Residues Asn-2 and Asn-15 are each glycosylated (N-linked (GlcNAc...) asparagine). Residues Phe-37–Val-61 traverse the membrane as a helical segment. The Cytoplasmic portion of the chain corresponds to Thr-62 to Asn-73. The helical transmembrane segment at Tyr-74 to Tyr-96 threads the bilayer. Residues Thr-97–Cys-110 are Extracellular-facing. Cys-110 and Cys-187 are disulfide-bonded. Residues Asn-111 to Ile-133 traverse the membrane as a helical segment. The 'Ionic lock' involved in activated form stabilization motif lies at Glu-134–Tyr-136. The Cytoplasmic portion of the chain corresponds to Glu-134–His-152. The chain crosses the membrane as a helical span at residues Ala-153–Val-173. Over Gly-174–Ser-202 the chain is Extracellular. Glu-201 provides a ligand contact to Zn(2+). Residues Phe-203–Gly-224 form a helical membrane-spanning segment. The Cytoplasmic segment spans residues Gln-225–Arg-252. The chain crosses the membrane as a helical span at residues Met-253–Tyr-274. Residues Ile-275–Ile-286 lie on the Extracellular side of the membrane. Position 279 (Gln-279) interacts with Zn(2+). The helical transmembrane segment at Phe-287–Met-308 threads the bilayer. The residue at position 296 (Lys-296) is an N6-(retinylidene)lysine. Residues Met-309–Ala-348 lie on the Cytoplasmic side of the membrane. Residues Cys-322 and Cys-323 are each lipidated (S-palmitoyl cysteine). Residues Asp-330 to Ala-348 are interaction with SAG. Ser-334 and Ser-338 each carry phosphoserine. Phosphothreonine is present on residues Thr-340 and Thr-342. At Ser-343 the chain carries Phosphoserine.

It belongs to the G-protein coupled receptor 1 family. Opsin subfamily. As to quaternary structure, homodimer. Interacts (phosphorylated form) with SAG. Interacts with GNAT1. Interacts with GNAT3. SAG and G-proteins compete for a common binding site. Interacts with GRK1. Interacts with PRCD; the interaction promotes PRCD stability. Forms a complex with ASAP1 and ARF4. Forms a complex with ASAP1, RAB11A, Rabin8/RAB3IP, ARF4 and RAB11FIP3; the complex regulates Golgi-to-cilia rhodopsin/RHO transport in photoreceptors. Post-translationally, phosphorylated on some or all of the serine and threonine residues present in the C-terminal region. Contains one covalently linked retinal chromophore. Upon light absorption, the covalently bound 11-cis-retinal is converted to all-trans-retinal. After hydrolysis of the Schiff base and release of the covalently bound all-trans-retinal, active rhodopsin is regenerated by binding of a fresh molecule of 11-cis-retinal.

It is found in the membrane. Its subcellular location is the cell projection. The protein localises to the cilium. The protein resides in the photoreceptor outer segment. Functionally, photoreceptor required for image-forming vision at low light intensity. Required for photoreceptor cell viability after birth. Light-induced isomerization of 11-cis to all-trans retinal triggers a conformational change that activates signaling via G-proteins. Subsequent receptor phosphorylation mediates displacement of the bound G-protein alpha subunit by the arrestin SAG and terminates signaling. This chain is Rhodopsin (RHO), found in Pagophilus groenlandicus (Harp seal).